Here is a 1563-residue protein sequence, read N- to C-terminus: Pentafunctional AROM polypeptide (1563 aa).

A 3-dehydroquinate synthase region spans residues 1-382 (MAESSSNPTR…YEPKASVVED (382 aa)). Residues 48–50 (DTN), 82–85 (EYSK), 113–115 (GGV), and D118 each bind NAD(+). A 7-phospho-2-dehydro-3-deoxy-D-arabino-heptonate-binding site is contributed by R129. Position 138–139 (138–139 (TT)) interacts with NAD(+). 7-phospho-2-dehydro-3-deoxy-D-arabino-heptonate-binding residues include D145 and K151. K160 contributes to the NAD(+) binding site. N161 contacts 7-phospho-2-dehydro-3-deoxy-D-arabino-heptonate. Residues 178–181 (FLNT) and N189 contribute to the NAD(+) site. A Zn(2+)-binding site is contributed by E193. 7-phospho-2-dehydro-3-deoxy-D-arabino-heptonate contacts are provided by residues 193–196 (EVIK) and K248. The active-site Proton acceptor; for 3-dehydroquinate synthase activity is E258. Residues 262-266 (RNLLN) and H269 each bind 7-phospho-2-dehydro-3-deoxy-D-arabino-heptonate. H269 is a Zn(2+) binding site. Catalysis depends on H273, which acts as the Proton acceptor; for 3-dehydroquinate synthase activity. H285 and K354 together coordinate 7-phospho-2-dehydro-3-deoxy-D-arabino-heptonate. H285 is a binding site for Zn(2+). The EPSP synthase stretch occupies residues 395 to 834 (VHAGVPKDLK…WDTMSNYFKS (440 aa)). C816 serves as the catalytic For EPSP synthase activity. Residues 836–850 (LEGEEEPHSSHVSHE) are compositionally biased toward basic and acidic residues. A disordered region spans residues 836–857 (LEGEEEPHSSHVSHEKPRKGNP). The segment at 857-1051 (PKSIFIIGMR…KKKPQSSFVS (195 aa)) is shikimate kinase. Position 864 to 871 (864 to 871 (GMRGAGKS)) interacts with ATP. The tract at residues 1052–1265 (LTVPNVSKAL…AAPGQLSAAE (214 aa)) is 3-dehydroquinase. The Proton acceptor; for 3-dehydroquinate dehydratase activity role is filled by H1168. K1196 (schiff-base intermediate with substrate; for 3-dehydroquinate dehydratase activity) is an active-site residue. The tract at residues 1278-1563 (PRSFYLFGKP…TDAQAAVMGN (286 aa)) is shikimate dehydrogenase.

This sequence in the N-terminal section; belongs to the sugar phosphate cyclases superfamily. Dehydroquinate synthase family. It in the 2nd section; belongs to the EPSP synthase family. The protein in the 3rd section; belongs to the shikimate kinase family. In the 4th section; belongs to the type-I 3-dehydroquinase family. This sequence in the C-terminal section; belongs to the shikimate dehydrogenase family. Homodimer. The cofactor is Zn(2+).

The protein resides in the cytoplasm. It carries out the reaction 7-phospho-2-dehydro-3-deoxy-D-arabino-heptonate = 3-dehydroquinate + phosphate. It catalyses the reaction 3-dehydroquinate = 3-dehydroshikimate + H2O. The enzyme catalyses shikimate + NADP(+) = 3-dehydroshikimate + NADPH + H(+). The catalysed reaction is shikimate + ATP = 3-phosphoshikimate + ADP + H(+). It carries out the reaction 3-phosphoshikimate + phosphoenolpyruvate = 5-O-(1-carboxyvinyl)-3-phosphoshikimate + phosphate. Its pathway is metabolic intermediate biosynthesis; chorismate biosynthesis; chorismate from D-erythrose 4-phosphate and phosphoenolpyruvate: step 2/7. It functions in the pathway metabolic intermediate biosynthesis; chorismate biosynthesis; chorismate from D-erythrose 4-phosphate and phosphoenolpyruvate: step 3/7. It participates in metabolic intermediate biosynthesis; chorismate biosynthesis; chorismate from D-erythrose 4-phosphate and phosphoenolpyruvate: step 4/7. The protein operates within metabolic intermediate biosynthesis; chorismate biosynthesis; chorismate from D-erythrose 4-phosphate and phosphoenolpyruvate: step 5/7. Its pathway is metabolic intermediate biosynthesis; chorismate biosynthesis; chorismate from D-erythrose 4-phosphate and phosphoenolpyruvate: step 6/7. In terms of biological role, the AROM polypeptide catalyzes 5 consecutive enzymatic reactions in prechorismate polyaromatic amino acid biosynthesis. This chain is Pentafunctional AROM polypeptide, found in Sordaria macrospora (strain ATCC MYA-333 / DSM 997 / K(L3346) / K-hell).